The primary structure comprises 404 residues: MNTKSIVFNADNDYVDKLETAIKSICCYNNCLKFYVFNDDIASEWFLMMNKRLKTIQSEIVNVKIVDHVLKKFHLPLKNLSYATFFRYFIPNFVKESRALYLDSDIIVTGSLDYLFDIELDGYALAAVEDSFGDVPSTNFNSGMLLVNVDTWRDEDACSKLLELTNQYHETAYGDQGILNMLFHDRWKRLDRNFNFMVGMDSVAHIEGNHKWYEISELKNGDLPSVIHYTGVKPWEIISNNRFREVWWFYNLLEWSDILLRKDIISRSFEELVYSPKAHTAIFTASCEMEHVEYLIENLPEVHFSILAHTYFASSVVALLRYSNVTIYPCFSPFDYRKILDNLDFYLDINHYKEVDNIVSVVQQLSKPIFTFENTSHDIGNQTNIFSSTEPNKMVEAIRQFIGE.

The tract at residues 1–267 (MNTKSIVFNA…ILLRKDIISR (267 aa)) is GT8 domain. Residues 9–14 (NADNDY) and 103–104 (DS) each bind UDP. Mn(2+)-binding residues include aspartate 103, aspartate 105, and histidine 228. Residue 228 to 233 (HYTGVK) participates in UDP binding.

The protein in the N-terminal section; belongs to the glycosyltransferase 8 family.

May be involved in the polymorphic O-glycosylation of the serine-rich repeat protein PsrP. Has equal hydrolytic activity against both UDP-galactose and UDP-glucose; no glycosyltransferase activity has been seen with tested substrates. This chain is Glycosyltransferase GlyB, found in Streptococcus pneumoniae serotype 4 (strain ATCC BAA-334 / TIGR4).